The primary structure comprises 199 residues: Crossover junction endodeoxyribonuclease RuvC (199 aa).

Residues Asp-17, Glu-76, and Asp-148 contribute to the active site. 3 residues coordinate Mg(2+): Asp-17, Glu-76, and Asp-148.

Belongs to the RuvC family. Homodimer which binds Holliday junction (HJ) DNA. The HJ becomes 2-fold symmetrical on binding to RuvC with unstacked arms; it has a different conformation from HJ DNA in complex with RuvA. In the full resolvosome a probable DNA-RuvA(4)-RuvB(12)-RuvC(2) complex forms which resolves the HJ. Mg(2+) serves as cofactor.

The protein localises to the cytoplasm. The enzyme catalyses Endonucleolytic cleavage at a junction such as a reciprocal single-stranded crossover between two homologous DNA duplexes (Holliday junction).. The RuvA-RuvB-RuvC complex processes Holliday junction (HJ) DNA during genetic recombination and DNA repair. Endonuclease that resolves HJ intermediates. Cleaves cruciform DNA by making single-stranded nicks across the HJ at symmetrical positions within the homologous arms, yielding a 5'-phosphate and a 3'-hydroxyl group; requires a central core of homology in the junction. The consensus cleavage sequence is 5'-(A/T)TT(C/G)-3'. Cleavage occurs on the 3'-side of the TT dinucleotide at the point of strand exchange. HJ branch migration catalyzed by RuvA-RuvB allows RuvC to scan DNA until it finds its consensus sequence, where it cleaves and resolves the cruciform DNA. This is Crossover junction endodeoxyribonuclease RuvC from Mannheimia succiniciproducens (strain KCTC 0769BP / MBEL55E).